Consider the following 222-residue polypeptide: Iodotyrosine deiodinase (222 aa).

FMN-binding positions include 34–38 (RRTVR) and 61–62 (PS). Residues E91, Y95, and K116 each contribute to the 3-iodo-L-tyrosine site. FMN contacts are provided by residues 171–173 (THT) and R212.

Belongs to the nitroreductase family. In terms of assembly, homodimer. FMN serves as cofactor.

The enzyme catalyses 2 iodide + L-tyrosine + 2 NADP(+) = 3,5-diiodo-L-tyrosine + 2 NADPH + H(+). It catalyses the reaction iodide + L-tyrosine + NADP(+) = 3-iodo-L-tyrosine + NADPH. The catalysed reaction is 3-iodo-L-tyrosine + iodide + NADP(+) = 3,5-diiodo-L-tyrosine + NADPH + H(+). It carries out the reaction L-tyrosine + chloride + NADP(+) = 3-chloro-L-tyrosine + NADPH. The enzyme catalyses bromide + L-tyrosine + NADP(+) = 3-bromo-L-tyrosine + NADPH. In terms of biological role, catalyzes the dehalogenation of halotyrosines such as 3-iodo-L-tyrosine and 3,5-diiodo-L-tyrosine. Likely to also catalyze the dehalogenation of other halotyrosines such as 3-bromo-L-tyrosine, 3-chloro-L-tyrosine and 3-iodo-L-tyrosine. Activity towards 3-iodo-L-tyrosine is much stronger than activity towards 3,5-diiodo-L-tyrosine and 2-iodophenol. This chain is Iodotyrosine deiodinase, found in Haliscomenobacter hydrossis (strain ATCC 27775 / DSM 1100 / LMG 10767 / O).